A 160-amino-acid polypeptide reads, in one-letter code: Large ribosomal subunit protein uL16 (160 aa).

The protein belongs to the universal ribosomal protein uL16 family. Part of the 50S ribosomal subunit.

Its function is as follows. Binds 23S rRNA and is also seen to make contacts with the A and possibly P site tRNAs. This chain is Large ribosomal subunit protein uL16, found in Prochlorococcus marinus (strain MIT 9515).